A 302-amino-acid polypeptide reads, in one-letter code: Recombination-associated protein RdgC (302 aa).

The protein belongs to the RdgC family.

Its subcellular location is the cytoplasm. It is found in the nucleoid. In terms of biological role, may be involved in recombination. This chain is Recombination-associated protein RdgC, found in Mannheimia succiniciproducens (strain KCTC 0769BP / MBEL55E).